The chain runs to 177 residues: Small ribosomal subunit protein uS5 (177 aa).

Residues 21 to 84 form the S5 DRBM domain; the sequence is LKEKMISVNR…DEARRGMIKI (64 aa).

It belongs to the universal ribosomal protein uS5 family. Part of the 30S ribosomal subunit. Contacts proteins S4 and S8.

Its function is as follows. With S4 and S12 plays an important role in translational accuracy. Located at the back of the 30S subunit body where it stabilizes the conformation of the head with respect to the body. The sequence is that of Small ribosomal subunit protein uS5 from Nitrosomonas eutropha (strain DSM 101675 / C91 / Nm57).